The following is a 765-amino-acid chain: DNA topoisomerase 1 (765 aa).

The segment covering 1–23 has biased composition (basic and acidic residues); sequence MSGDHLHNDSQIEADFRLNDSHK. Positions 1–199 are disordered; that stretch reads MSGDHLHNDS…NKKKKPKKEE (199 aa). At S2 the chain carries N-acetylserine. 2 positions are modified to phosphoserine: S2 and S10. Positions 24–39 are enriched in basic residues; the sequence is HKDKHKDREHRHKEHK. A compositionally biased stretch (basic and acidic residues) spans 40-108; sequence KEKDREKSKH…DAKIKKEKEN (69 aa). S57 carries the phosphoserine modification. Residue K101 forms a Glycyl lysine isopeptide (Lys-Gly) (interchain with G-Cter in SUMO2) linkage. K103 is covalently cross-linked (Glycyl lysine isopeptide (Lys-Gly) (interchain with G-Cter in SUMO); alternate). K103 participates in a covalent cross-link: Glycyl lysine isopeptide (Lys-Gly) (interchain with G-Cter in SUMO2); alternate. S112 is subject to Phosphoserine. Residue K117 forms a Glycyl lysine isopeptide (Lys-Gly) (interchain with G-Cter in SUMO); alternate linkage. A Glycyl lysine isopeptide (Lys-Gly) (interchain with G-Cter in SUMO2); alternate cross-link involves residue K117. Residue K117 forms a Glycyl lysine isopeptide (Lys-Gly) (interchain with G-Cter in SUMO1); alternate linkage. The segment covering 129–166 has biased composition (basic and acidic residues); it reads PKEDIKPLKRPRDEDDADYKPKKIKTEDTKKEKKRKLE. Residues K134 and K148 each participate in a glycyl lysine isopeptide (Lys-Gly) (interchain with G-Cter in SUMO2) cross-link. K153 is covalently cross-linked (Glycyl lysine isopeptide (Lys-Gly) (interchain with G-Cter in SUMO); alternate). Residue K153 forms a Glycyl lysine isopeptide (Lys-Gly) (interchain with G-Cter in SUMO2); alternate linkage. Glycyl lysine isopeptide (Lys-Gly) (interchain with G-Cter in SUMO2) cross-links involve residues K158 and K164. K172 is covalently cross-linked (Glycyl lysine isopeptide (Lys-Gly) (interchain with G-Cter in SUMO2); alternate). Position 172 is an N6-acetyllysine; alternate (K172). Positions 179 to 199 are enriched in basic and acidic residues; it reads KDKDKKVPEPDNKKKKPKKEE. A Glycyl lysine isopeptide (Lys-Gly) (interchain with G-Cter in SUMO2) cross-link involves residue K204. The residue at position 280 (K280) is an N6-acetyllysine. Residue K336 forms a Glycyl lysine isopeptide (Lys-Gly) (interchain with G-Cter in SUMO2) linkage. Interaction with DNA stretches follow at residues 425-426 and 488-493; these read KY and RAGNEK. The Topo IB-type catalytic domain occupies 432-765; sequence SSRIKGEKDW…IDMADEDYEF (334 aa). S506 is modified (phosphoserine; by CK2). Residue K549 forms a Glycyl lysine isopeptide (Lys-Gly) (interchain with G-Cter in SUMO2) linkage. Positions 585-587 are interaction with DNA; it reads TAK. Glycyl lysine isopeptide (Lys-Gly) (interchain with G-Cter in SUMO2) cross-links involve residues K642, K700, and K712. Y723 acts as the O-(3'-phospho-DNA)-tyrosine intermediate in catalysis.

The protein belongs to the type IB topoisomerase family. Monomer. Interacts with ERCC6. Interacts with TPRN; TPRN interacts with a number of DNA damage response proteins, is recruited to sites of DNA damage and may play a role in DNA damage repair. As to quaternary structure, (Microbial infection) Interacts with SV40 Large T antigen; this interactions allows viral DNA replication. In terms of processing, sumoylated. Lys-117 is the main site of sumoylation. Sumoylation plays a role in partitioning TOP1 between nucleoli and nucleoplasm. Levels are dramatically increased on camptothecin (CPT) treatment. Post-translationally, phosphorylation at Ser-506 by CK2 increases binding to supercoiled DNA and sensitivity to camptothecin. As to expression, endothelial cells.

It localises to the nucleus. The protein localises to the nucleolus. It is found in the nucleoplasm. The enzyme catalyses ATP-independent breakage of single-stranded DNA, followed by passage and rejoining.. Its activity is regulated as follows. Specifically inhibited by camptothecin (CPT), a plant alkaloid with antitumor activity. Releases the supercoiling and torsional tension of DNA introduced during the DNA replication and transcription by transiently cleaving and rejoining one strand of the DNA duplex. Introduces a single-strand break via transesterification at a target site in duplex DNA. The scissile phosphodiester is attacked by the catalytic tyrosine of the enzyme, resulting in the formation of a DNA-(3'-phosphotyrosyl)-enzyme intermediate and the expulsion of a 5'-OH DNA strand. The free DNA strand then rotates around the intact phosphodiester bond on the opposing strand, thus removing DNA supercoils. Finally, in the religation step, the DNA 5'-OH attacks the covalent intermediate to expel the active-site tyrosine and restore the DNA phosphodiester backbone. Regulates the alternative splicing of tissue factor (F3) pre-mRNA in endothelial cells. Involved in the circadian transcription of the core circadian clock component BMAL1 by altering the chromatin structure around the ROR response elements (ROREs) on the BMAL1 promoter. The chain is DNA topoisomerase 1 (TOP1) from Homo sapiens (Human).